Reading from the N-terminus, the 137-residue chain is Large ribosomal subunit protein uL16 (137 aa).

The protein belongs to the universal ribosomal protein uL16 family. Part of the 50S ribosomal subunit.

Binds 23S rRNA and is also seen to make contacts with the A and possibly P site tRNAs. This is Large ribosomal subunit protein uL16 from Pseudomonas fluorescens (strain Pf0-1).